Reading from the N-terminus, the 164-residue chain is CASP-like protein 1C1 (164 aa).

Topologically, residues 1 to 15 (MGDVEIPPLVKQIVR) are cytoplasmic. Residues 16 to 36 (GLRGLAFLATILATSFMAASH) form a helical membrane-spanning segment. The Extracellular segment spans residues 37-56 (ERAIFPFDYKADYTDLMLFK). The chain crosses the membrane as a helical span at residues 57 to 77 (AFLGANIAASLYSFFFVCLPP). The Cytoplasmic segment spans residues 78 to 83 (KSLLWR). A helical transmembrane segment spans residues 84-104 (LAIVLDVIMFGLLVAMDSAAI). The Extracellular segment spans residues 105 to 132 (AAAYLHKHGDSQAFWPPICSQVPTYCYR). Residues 133–153 (VILAISIGFGGVFMFLLIIII) traverse the membrane as a helical segment. Residues 154–164 (SISVILNPLLV) lie on the Cytoplasmic side of the membrane.

The protein belongs to the Casparian strip membrane proteins (CASP) family. As to quaternary structure, homodimer and heterodimers.

It is found in the cell membrane. This chain is CASP-like protein 1C1, found in Populus trichocarpa (Western balsam poplar).